The primary structure comprises 166 residues: NAD(P)H-quinone oxidoreductase subunit I, chloroplastic (166 aa).

4Fe-4S ferredoxin-type domains follow at residues 55–84 (GRIH…VDWK) and 95–124 (LNYS…MTEE). The [4Fe-4S] cluster site is built by C64, C67, C70, C74, C104, C107, C110, and C114.

Belongs to the complex I 23 kDa subunit family. NDH is composed of at least 16 different subunits, 5 of which are encoded in the nucleus. [4Fe-4S] cluster serves as cofactor.

It localises to the plastid. Its subcellular location is the chloroplast thylakoid membrane. It catalyses the reaction a plastoquinone + NADH + (n+1) H(+)(in) = a plastoquinol + NAD(+) + n H(+)(out). It carries out the reaction a plastoquinone + NADPH + (n+1) H(+)(in) = a plastoquinol + NADP(+) + n H(+)(out). Functionally, NDH shuttles electrons from NAD(P)H:plastoquinone, via FMN and iron-sulfur (Fe-S) centers, to quinones in the photosynthetic chain and possibly in a chloroplast respiratory chain. The immediate electron acceptor for the enzyme in this species is believed to be plastoquinone. Couples the redox reaction to proton translocation, and thus conserves the redox energy in a proton gradient. This is NAD(P)H-quinone oxidoreductase subunit I, chloroplastic from Melampodium leucanthum (Black foot daisy).